A 445-amino-acid chain; its full sequence is Phosphoglucosamine mutase (445 aa).

The active-site Phosphoserine intermediate is Ser102. Residues Ser102, Asp241, Asp243, and Asp245 each contribute to the Mg(2+) site. Ser102 is modified (phosphoserine).

Belongs to the phosphohexose mutase family. Mg(2+) serves as cofactor. Activated by phosphorylation.

It catalyses the reaction alpha-D-glucosamine 1-phosphate = D-glucosamine 6-phosphate. Functionally, catalyzes the conversion of glucosamine-6-phosphate to glucosamine-1-phosphate. The sequence is that of Phosphoglucosamine mutase from Salmonella choleraesuis (strain SC-B67).